The sequence spans 275 residues: 4-hydroxy-3-methylbut-2-enyl diphosphate reductase (275 aa).

Cys12 is a binding site for [4Fe-4S] cluster. 2 residues coordinate (2E)-4-hydroxy-3-methylbut-2-enyl diphosphate: His40 and His70. Residues His40 and His70 each coordinate dimethylallyl diphosphate. His40 and His70 together coordinate isopentenyl diphosphate. Cys92 lines the [4Fe-4S] cluster pocket. A (2E)-4-hydroxy-3-methylbut-2-enyl diphosphate-binding site is contributed by His119. A dimethylallyl diphosphate-binding site is contributed by His119. His119 provides a ligand contact to isopentenyl diphosphate. Glu121 acts as the Proton donor in catalysis. A (2E)-4-hydroxy-3-methylbut-2-enyl diphosphate-binding site is contributed by Thr151. Position 181 (Cys181) interacts with [4Fe-4S] cluster. Residues Ser209, Ser210, Asn211, and Ser251 each contribute to the (2E)-4-hydroxy-3-methylbut-2-enyl diphosphate site. Residues Ser209, Ser210, Asn211, and Ser251 each contribute to the dimethylallyl diphosphate site. Residues Ser209, Ser210, Asn211, and Ser251 each contribute to the isopentenyl diphosphate site.

It belongs to the IspH family. [4Fe-4S] cluster serves as cofactor.

The catalysed reaction is isopentenyl diphosphate + 2 oxidized [2Fe-2S]-[ferredoxin] + H2O = (2E)-4-hydroxy-3-methylbut-2-enyl diphosphate + 2 reduced [2Fe-2S]-[ferredoxin] + 2 H(+). It catalyses the reaction dimethylallyl diphosphate + 2 oxidized [2Fe-2S]-[ferredoxin] + H2O = (2E)-4-hydroxy-3-methylbut-2-enyl diphosphate + 2 reduced [2Fe-2S]-[ferredoxin] + 2 H(+). It participates in isoprenoid biosynthesis; dimethylallyl diphosphate biosynthesis; dimethylallyl diphosphate from (2E)-4-hydroxy-3-methylbutenyl diphosphate: step 1/1. The protein operates within isoprenoid biosynthesis; isopentenyl diphosphate biosynthesis via DXP pathway; isopentenyl diphosphate from 1-deoxy-D-xylulose 5-phosphate: step 6/6. In terms of biological role, catalyzes the conversion of 1-hydroxy-2-methyl-2-(E)-butenyl 4-diphosphate (HMBPP) into a mixture of isopentenyl diphosphate (IPP) and dimethylallyl diphosphate (DMAPP). Acts in the terminal step of the DOXP/MEP pathway for isoprenoid precursor biosynthesis. This Thermotoga petrophila (strain ATCC BAA-488 / DSM 13995 / JCM 10881 / RKU-1) protein is 4-hydroxy-3-methylbut-2-enyl diphosphate reductase.